We begin with the raw amino-acid sequence, 496 residues long: MFRSKRSGLVRRLWRSRVVPDREEGGSGGGGGGDEDGSLGSRAEPAPRAREGGGCGRSEVRPVAPRRPRDAVGQRGAQGAGRRRRAGGPPRPMSEPGAGAGSSLLDVAEPGGPGWLPESDCETVTCCLFSERDAAGAPRDASDPLAGAALEPAGGGRSREARSRLLLLEQELKTVTYSLLKRLKERSLDTLLEAVESRGGVPGGCVLVPRADLRLGGQPAPPQLLLGRLFRWPDLQHAVELKPLCGCHSFAAAADGPTVCCNPYHFSRLCGPESPPPPYSRLSPRDEYKPLDLSDSTLSYTETEATNSLITAPGEFSDASMSPDATKPSHWCSVAYWEHRTRVGRLYAVYDQAVSIFYDLPQGSGFCLGQLNLEQRSESVRRTRSKIGFGILLSKEPDGVWAYNRGEHPIFVNSPTLDAPGGRALVVRKVPPGYSIKVFDFERSGLQHAPEPDAADGPYDPNSVRISFAKGWGPCYSRQFITSCPCWLEILLNNPR.

Residues methionine 1–arginine 15 are compositionally biased toward basic residues. Disordered regions lie at residues methionine 1 to leucine 116 and glycine 136 to glycine 156. A dimethylated arginine; alternate mark is found at arginine 75 and arginine 82. An omega-N-methylarginine; alternate mark is found at arginine 75 and arginine 82. Positions alanine 148–proline 275 constitute an MH1 domain. Residue lysine 173 forms a Glycyl lysine isopeptide (Lys-Gly) (interchain with G-Cter in ubiquitin) linkage. Zn(2+)-binding residues include cysteine 205, cysteine 247, cysteine 260, and histidine 265. Residues tryptophan 331 to arginine 496 enclose the MH2 domain. Serine 435 carries the post-translational modification Phosphoserine; by PRKX; in vitro.

This sequence belongs to the dwarfin/SMAD family. In terms of assembly, interacts with NEDD4L. Interacts with WWP1. Interacts with STAMBP and PRKX. Interacts with RNF111 and AXIN1. Interacts with TGF-beta type I receptor superfamily members, including ACVR1B, BMPR1B and TGFBR1. In response to BMP2, but not to TGFB treatment, interacts with SMAD1, but not with SMAD2, nor with SMAD4; this interaction may inhibit SMAD1 binding to SMAD4. Interacts with HOXC8 and HOXC9. Interacts with PELI1; this interaction interferes with PELI1 complex formation with TRAF6, IRAK1, IRAK4 and MYD88 in response to IL1B and hence negatively regulates IL1R-TLR signaling. Interacts with TSC22D1/TSC-22. Post-translationally, phosphorylated by BMP type 1 receptor kinase and by PRKX. Monoubiquitinated at Lys-173 by the E2/E3 hybrid ubiquitin-protein ligase UBE2O, leading to reduced binding affinity for the activated BMP type I receptor ACVR1/ALK2, thereby enhancing BMP7 and regulating adipocyte differentiation. Ubiquitinated by WWP1. Ubiquitinated by ARK2C, promoting proteasomal degradation, leading to enhance the BMP-Smad signaling. In terms of processing, arginine methylation by PRMT1, which is recruited by BMPR2, initiates BMP-Induced signaling and induces dissociation from the BMPR1B receptor at the cell surface leading to derepress downstream Smad1/Smad5 signaling. As to expression, expressed in the brain, heart, ovary, peripheral blood leukocytes, small intestine, spleen, thymus, bone marrow, fetal liver and lymph nodes.

Its subcellular location is the nucleus. Transforming growth factor-beta superfamily receptors signaling occurs through the Smad family of intracellular mediators. SMAD6 is an inhibitory Smad (i-Smad) that negatively regulates signaling downstream of type I transforming growth factor-beta. Acts as a mediator of TGF-beta and BMP anti-inflammatory activities. Suppresses IL1R-TLR signaling through its direct interaction with PEL1, preventing NF-kappa-B activation, nuclear transport and NF-kappa-B-mediated expression of pro-inflammatory genes. Blocks the BMP-SMAD1 signaling pathway by competing with SMAD4 for receptor-activated SMAD1-binding. Binds to regulatory elements in target promoter regions. The protein is Mothers against decapentaplegic homolog 6 (SMAD6) of Homo sapiens (Human).